The sequence spans 507 residues: Glutamyl-tRNA(Gln) amidotransferase subunit A, mitochondrial (507 aa).

Catalysis depends on charge relay system residues Lys79 and Ser160. Ser184 serves as the catalytic Acyl-ester intermediate.

Belongs to the amidase family. GatA subfamily. As to quaternary structure, subunit of the heterotrimeric GatCAB amidotransferase (AdT) complex, composed of A, B and C subunits.

It localises to the mitochondrion. It catalyses the reaction L-glutamyl-tRNA(Gln) + L-glutamine + ATP + H2O = L-glutaminyl-tRNA(Gln) + L-glutamate + ADP + phosphate + H(+). Functionally, allows the formation of correctly charged Gln-tRNA(Gln) through the transamidation of misacylated Glu-tRNA(Gln) in the mitochondria. The reaction takes place in the presence of glutamine and ATP through an activated gamma-phospho-Glu-tRNA(Gln). In Drosophila pseudoobscura pseudoobscura (Fruit fly), this protein is Glutamyl-tRNA(Gln) amidotransferase subunit A, mitochondrial.